The primary structure comprises 367 residues: tRNA/tmRNA (uracil-C(5))-methyltransferase (367 aa).

S-adenosyl-L-methionine contacts are provided by glutamine 190, tyrosine 218, asparagine 223, glutamate 239, and aspartate 299. Residue cysteine 324 is the Nucleophile of the active site. The Proton acceptor role is filled by glutamate 358.

The protein belongs to the class I-like SAM-binding methyltransferase superfamily. RNA M5U methyltransferase family. TrmA subfamily.

It carries out the reaction uridine(54) in tRNA + S-adenosyl-L-methionine = 5-methyluridine(54) in tRNA + S-adenosyl-L-homocysteine + H(+). It catalyses the reaction uridine(341) in tmRNA + S-adenosyl-L-methionine = 5-methyluridine(341) in tmRNA + S-adenosyl-L-homocysteine + H(+). Its function is as follows. Dual-specificity methyltransferase that catalyzes the formation of 5-methyluridine at position 54 (m5U54) in all tRNAs, and that of position 341 (m5U341) in tmRNA (transfer-mRNA). In Pectobacterium carotovorum subsp. carotovorum (strain PC1), this protein is tRNA/tmRNA (uracil-C(5))-methyltransferase.